Here is a 377-residue protein sequence, read N- to C-terminus: uncharacterized protein (377 aa).

The next 2 helical transmembrane spans lie at 23–43 and 251–271; these read LKFI…FIAY and GSFI…SISY.

The protein resides in the cell membrane. This is an uncharacterized protein from Methanocaldococcus jannaschii (strain ATCC 43067 / DSM 2661 / JAL-1 / JCM 10045 / NBRC 100440) (Methanococcus jannaschii).